The chain runs to 447 residues: 3-phosphoshikimate 1-carboxyvinyltransferase 2 (447 aa).

The 3-phosphoshikimate site is built by K40, S41, and R45. K40 lines the phosphoenolpyruvate pocket. Phosphoenolpyruvate-binding residues include G109 and R138. S184, S185, Q186, D329, and H356 together coordinate 3-phosphoshikimate. A phosphoenolpyruvate-binding site is contributed by Q186. Residue D329 is the Proton acceptor of the active site. The phosphoenolpyruvate site is built by R360, R403, and K428.

This sequence belongs to the EPSP synthase family. Monomer.

It localises to the cytoplasm. It carries out the reaction 3-phosphoshikimate + phosphoenolpyruvate = 5-O-(1-carboxyvinyl)-3-phosphoshikimate + phosphate. The protein operates within metabolic intermediate biosynthesis; chorismate biosynthesis; chorismate from D-erythrose 4-phosphate and phosphoenolpyruvate: step 6/7. Its function is as follows. Catalyzes the transfer of the enolpyruvyl moiety of phosphoenolpyruvate (PEP) to the 5-hydroxyl of shikimate-3-phosphate (S3P) to produce enolpyruvyl shikimate-3-phosphate and inorganic phosphate. The polypeptide is 3-phosphoshikimate 1-carboxyvinyltransferase 2 (Halalkalibacterium halodurans (strain ATCC BAA-125 / DSM 18197 / FERM 7344 / JCM 9153 / C-125) (Bacillus halodurans)).